The primary structure comprises 208 residues: Protein-L-isoaspartate O-methyltransferase (208 aa).

The active site involves Ser-59.

Belongs to the methyltransferase superfamily. L-isoaspartyl/D-aspartyl protein methyltransferase family.

It is found in the cytoplasm. The enzyme catalyses [protein]-L-isoaspartate + S-adenosyl-L-methionine = [protein]-L-isoaspartate alpha-methyl ester + S-adenosyl-L-homocysteine. Functionally, catalyzes the methyl esterification of L-isoaspartyl residues in peptides and proteins that result from spontaneous decomposition of normal L-aspartyl and L-asparaginyl residues. It plays a role in the repair and/or degradation of damaged proteins. This chain is Protein-L-isoaspartate O-methyltransferase, found in Vibrio campbellii (strain ATCC BAA-1116).